A 1158-amino-acid polypeptide reads, in one-letter code: Putative HERC2-like protein 3 (1158 aa).

Residues 281–302 (PRKKRVPKKPESTDDEEKIGNE) form a disordered region. Over residues 293 to 302 (TDDEEKIGNE) the composition is skewed to acidic residues. The region spanning 587-660 (SGPELAAMMK…NYDLKLAELP (74 aa)) is the MIB/HERC2 domain. The disordered stretch occupies residues 662-684 (PAQPSAEDSDTEDDSEAEQTERN). Positions 668-679 (EDSDTEDDSEAE) are enriched in acidic residues.

The polypeptide is Putative HERC2-like protein 3 (HERC2P3) (Homo sapiens (Human)).